Consider the following 202-residue polypeptide: Glycerol-3-phosphate acyltransferase (202 aa).

The next 4 membrane-spanning stretches (helical) occupy residues 2 to 22, 82 to 102, 119 to 139, and 158 to 178; these read ANLL…AVVV, DTGL…PVFH, AIDP…AFFF, and VLMN…VLLI.

This sequence belongs to the PlsY family. In terms of assembly, probably interacts with PlsX.

It is found in the cell inner membrane. It catalyses the reaction an acyl phosphate + sn-glycerol 3-phosphate = a 1-acyl-sn-glycero-3-phosphate + phosphate. It participates in lipid metabolism; phospholipid metabolism. Catalyzes the transfer of an acyl group from acyl-phosphate (acyl-PO(4)) to glycerol-3-phosphate (G3P) to form lysophosphatidic acid (LPA). This enzyme utilizes acyl-phosphate as fatty acyl donor, but not acyl-CoA or acyl-ACP. The sequence is that of Glycerol-3-phosphate acyltransferase from Cupriavidus taiwanensis (strain DSM 17343 / BCRC 17206 / CCUG 44338 / CIP 107171 / LMG 19424 / R1) (Ralstonia taiwanensis (strain LMG 19424)).